A 427-amino-acid polypeptide reads, in one-letter code: Serine--tRNA ligase (427 aa).

Thr231–Glu233 serves as a coordination point for L-serine. Position 262 to 264 (Arg262 to Glu264) interacts with ATP. Glu285 provides a ligand contact to L-serine. Glu349–Ser352 is an ATP binding site. Ser385 serves as a coordination point for L-serine.

This sequence belongs to the class-II aminoacyl-tRNA synthetase family. Type-1 seryl-tRNA synthetase subfamily. Homodimer. The tRNA molecule binds across the dimer.

It is found in the cytoplasm. It carries out the reaction tRNA(Ser) + L-serine + ATP = L-seryl-tRNA(Ser) + AMP + diphosphate + H(+). It catalyses the reaction tRNA(Sec) + L-serine + ATP = L-seryl-tRNA(Sec) + AMP + diphosphate + H(+). Its pathway is aminoacyl-tRNA biosynthesis; selenocysteinyl-tRNA(Sec) biosynthesis; L-seryl-tRNA(Sec) from L-serine and tRNA(Sec): step 1/1. Functionally, catalyzes the attachment of serine to tRNA(Ser). Is also able to aminoacylate tRNA(Sec) with serine, to form the misacylated tRNA L-seryl-tRNA(Sec), which will be further converted into selenocysteinyl-tRNA(Sec). This Hahella chejuensis (strain KCTC 2396) protein is Serine--tRNA ligase.